We begin with the raw amino-acid sequence, 292 residues long: MNNHFKCIGIVGHPRHPTALTTHEMLYRWLCTKGYEVIVEQQIAHELQLKNVKTGTLAEIGQLADLAVVVGGDGNMLGAARTLARYDIKVIGINRGNLGFLTDLDPDNAQQQLADVLEGHYTSEKRFLLEAQVCQQDCQKRISTAINEVVLHPGKVAHMIEFEVYIDEIFAFSQRSDGLIISTPTGSTAYSLSAGGPILTPSLDAITLVPMFPHTLSARPLVINSSSTIRLRFSHRRNDLEISCDSQIALPIQEGEDVLIRRCDYHLNLIHPKDYSYLNTLSTKLGWSKKLF.

Asp-73 acts as the Proton acceptor in catalysis. NAD(+) contacts are provided by residues 73–74 (DG), 147–148 (NE), His-158, Arg-175, Asp-177, 188–193 (TAYSLS), and Gln-247.

The protein belongs to the NAD kinase family. A divalent metal cation serves as cofactor.

The protein resides in the cytoplasm. The enzyme catalyses NAD(+) + ATP = ADP + NADP(+) + H(+). Involved in the regulation of the intracellular balance of NAD and NADP, and is a key enzyme in the biosynthesis of NADP. Catalyzes specifically the phosphorylation on 2'-hydroxyl of the adenosine moiety of NAD to yield NADP. The sequence is that of NAD kinase from Shigella dysenteriae serotype 1 (strain Sd197).